The following is a 248-amino-acid chain: Tyrosine recombinase XerD-like (248 aa).

The 72-residue stretch at 1 to 72 (MKSYIEPFIA…TANQFLYYLY (72 aa)) folds into the Core-binding (CB) domain. The Tyr recombinase domain occupies 85 to 248 (DTMKVMRTEK…PVTLEKYYKS (164 aa)). Active-site residues include K149 and R213. Y245 functions as the O-(3'-phospho-DNA)-tyrosine intermediate in the catalytic mechanism.

The protein belongs to the 'phage' integrase family. XerD-like subfamily.

The protein localises to the cytoplasm. Putative tyrosine recombinase. Not involved in the cutting and rejoining of the recombining DNA molecules on dif(SL) site. The polypeptide is Tyrosine recombinase XerD-like (Streptococcus pyogenes serotype M4 (strain MGAS10750)).